The chain runs to 188 residues: Elongation factor P (188 aa).

Belongs to the elongation factor P family.

The protein localises to the cytoplasm. It participates in protein biosynthesis; polypeptide chain elongation. Involved in peptide bond synthesis. Stimulates efficient translation and peptide-bond synthesis on native or reconstituted 70S ribosomes in vitro. Probably functions indirectly by altering the affinity of the ribosome for aminoacyl-tRNA, thus increasing their reactivity as acceptors for peptidyl transferase. The chain is Elongation factor P from Wolbachia sp. subsp. Drosophila simulans (strain wRi).